We begin with the raw amino-acid sequence, 612 residues long: Elongation factor 4 (612 aa).

In terms of domain architecture, tr-type G spans K11–N193. GTP-binding positions include D23–T28 and N140–D143.

The protein belongs to the TRAFAC class translation factor GTPase superfamily. Classic translation factor GTPase family. LepA subfamily.

The protein resides in the cell membrane. The catalysed reaction is GTP + H2O = GDP + phosphate + H(+). Required for accurate and efficient protein synthesis under certain stress conditions. May act as a fidelity factor of the translation reaction, by catalyzing a one-codon backward translocation of tRNAs on improperly translocated ribosomes. Back-translocation proceeds from a post-translocation (POST) complex to a pre-translocation (PRE) complex, thus giving elongation factor G a second chance to translocate the tRNAs correctly. Binds to ribosomes in a GTP-dependent manner. The sequence is that of Elongation factor 4 from Lactobacillus gasseri (strain ATCC 33323 / DSM 20243 / BCRC 14619 / CIP 102991 / JCM 1131 / KCTC 3163 / NCIMB 11718 / NCTC 13722 / AM63).